Consider the following 412-residue polypeptide: Imidazolonepropionase (412 aa).

Fe(3+)-binding residues include His76 and His78. The Zn(2+) site is built by His76 and His78. Residues Arg85, Tyr148, and His181 each coordinate 4-imidazolone-5-propanoate. Residue Tyr148 coordinates N-formimidoyl-L-glutamate. Fe(3+) is bound at residue His242. Zn(2+) is bound at residue His242. Glu245 contributes to the 4-imidazolone-5-propanoate binding site. Asp317 contacts Fe(3+). Residue Asp317 coordinates Zn(2+). Asn319 and Gly321 together coordinate N-formimidoyl-L-glutamate. Ser322 contacts 4-imidazolone-5-propanoate.

The protein belongs to the metallo-dependent hydrolases superfamily. HutI family. Zn(2+) is required as a cofactor. It depends on Fe(3+) as a cofactor.

Its subcellular location is the cytoplasm. The enzyme catalyses 4-imidazolone-5-propanoate + H2O = N-formimidoyl-L-glutamate. It participates in amino-acid degradation; L-histidine degradation into L-glutamate; N-formimidoyl-L-glutamate from L-histidine: step 3/3. In terms of biological role, catalyzes the hydrolytic cleavage of the carbon-nitrogen bond in imidazolone-5-propanoate to yield N-formimidoyl-L-glutamate. It is the third step in the universal histidine degradation pathway. This is Imidazolonepropionase from Staphylococcus aureus (strain MRSA252).